Consider the following 569-residue polypeptide: Urease subunit alpha (569 aa).

The Urease domain maps to 131 to 569; the sequence is GGIDAHIHFI…VPMAQRYFLF (439 aa). 3 residues coordinate Ni(2+): His-136, His-138, and Lys-219. Position 219 is an N6-carboxylysine (Lys-219). His-221 lines the substrate pocket. His-248 and His-274 together coordinate Ni(2+). His-322 acts as the Proton donor in catalysis. Asp-362 lines the Ni(2+) pocket.

It belongs to the metallo-dependent hydrolases superfamily. Urease alpha subunit family. Heterotrimer of UreA (gamma), UreB (beta) and UreC (alpha) subunits. Three heterotrimers associate to form the active enzyme. It depends on Ni cation as a cofactor. Post-translationally, carboxylation allows a single lysine to coordinate two nickel ions.

Its subcellular location is the cytoplasm. It catalyses the reaction urea + 2 H2O + H(+) = hydrogencarbonate + 2 NH4(+). Its pathway is nitrogen metabolism; urea degradation; CO(2) and NH(3) from urea (urease route): step 1/1. The chain is Urease subunit alpha from Bacillus sp. (strain TB-90).